Reading from the N-terminus, the 416-residue chain is Serine hydroxymethyltransferase (416 aa).

(6S)-5,6,7,8-tetrahydrofolate is bound by residues Leu117 and 121 to 123; that span reads GHL. N6-(pyridoxal phosphate)lysine is present on Lys226. Residue Glu242 coordinates (6S)-5,6,7,8-tetrahydrofolate.

Belongs to the SHMT family. In terms of assembly, homodimer. The cofactor is pyridoxal 5'-phosphate.

Its subcellular location is the cytoplasm. It catalyses the reaction (6R)-5,10-methylene-5,6,7,8-tetrahydrofolate + glycine + H2O = (6S)-5,6,7,8-tetrahydrofolate + L-serine. It functions in the pathway one-carbon metabolism; tetrahydrofolate interconversion. The protein operates within amino-acid biosynthesis; glycine biosynthesis; glycine from L-serine: step 1/1. Catalyzes the reversible interconversion of serine and glycine with tetrahydrofolate (THF) serving as the one-carbon carrier. This reaction serves as the major source of one-carbon groups required for the biosynthesis of purines, thymidylate, methionine, and other important biomolecules. Also exhibits THF-independent aldolase activity toward beta-hydroxyamino acids, producing glycine and aldehydes, via a retro-aldol mechanism. The chain is Serine hydroxymethyltransferase from Endomicrobium trichonymphae.